Here is a 497-residue protein sequence, read N- to C-terminus: Serine/threonine-protein kinase 3 (497 aa).

The residue at position 1 (M1) is an N-acetylmethionine. Positions 1 to 20 (MEQPPASKSKLKKLSEDSLT) are disordered. The residue at position 15 (S15) is a Phosphoserine. In terms of domain architecture, Protein kinase spans 27-278 (FDVLEKLGEG…ATQLLQHPFI (252 aa)). Residues 33–41 (LGEGSYGSV) and K56 each bind ATP. T117 is modified (phosphothreonine; by PKB/AKT1). Catalysis depends on D146, which acts as the Proton acceptor. Residues N151 and D164 each coordinate Mg(2+). T180 is subject to Phosphothreonine; by autocatalysis. Residues 287-328 (LRDLIAEAMEIKAKRHEEQQRELEEEEENSDEDELDSHTMVK) adopt a coiled-coil conformation. 2 disordered regions span residues 301–343 (RHEE…TSTM) and 368–394 (NSEEEEEEEEEEEEDGTMKRNATSPQV). The span at 309–321 (LEEEEENSDEDEL) shows a compositional bias: acidic residues. A Phosphoserine modification is found at S316. Over residues 326 to 343 (MVKTSSESVGTMRATSTM) the composition is skewed to polar residues. Phosphothreonine is present on T336. A coiled-coil region spans residues 366–387 (VINSEEEEEEEEEEEEDGTMKR). Over residues 369-382 (SEEEEEEEEEEEED) the composition is skewed to acidic residues. T384 carries the post-translational modification Phosphothreonine. T390 is subject to Phosphothreonine; by PKB/AKT1. 2 positions are modified to phosphoserine: S391 and S450. The SARAH domain maps to 443–490 (FDFLKNLSLEELQMRLKALDPMMEREIEELHQRYSAKRQPILDAMDAK). A coiled-coil region spans residues 448–479 (NLSLEELQMRLKALDPMMEREIEELHQRYSAK).

The protein belongs to the protein kinase superfamily. STE Ser/Thr protein kinase family. STE20 subfamily. Homodimer; mediated via the coiled-coil region. Interacts with NORE1, which inhibits autoactivation. Interacts with and stabilizes SAV1. Interacts with RAF1, which prevents dimerization and phosphorylation. Interacts with RASSF1. Interacts (via SARAH domain) with isoform 1 of NEK2. Interacts with ESR1 only in the presence of SAV1. Interacts with PKB/AKT1. Forms a tripartite complex with MOBKL1B and STK38. Interacts with RASSF2 (via SARAH domain). Interacts with DLG5 (via PDZ domain 3). Interacts with LATS1; this interaction is inhibited in the presence of DLG5. Interacts with MARK3 in the presence of DLG5. Interacts with RASSF5; this interaction inhibits STK3 autoactivation through heterodimerization. Interacts (when phosphorylated) with SLMAP (via FHA domain); the interaction associates STK3 with the STRIPAK complex. Mg(2+) is required as a cofactor. In terms of processing, autophosphorylated on two residues Thr-174 and Thr-180, leading to activation. Phosphorylation at Thr-117 and Thr-390 by PKB/AKT1, leads to inhibition of its: cleavage, kinase activity, autophosphorylation at Thr-180, binding to RASSF1 and nuclear translocation, and increase in its binding to RAF1. Phosphorylated at Ser-15 by PLK1, leading to activation. Proteolytically cleaved by caspase-3 during apoptosis. Proteolytic cleavage results in kinase activation and nuclear translocation of the truncated form (MST1/N). Post-translationally, ubiquitinated by TRIM69; leading to its redistribution to the perinuclear cytoskeleton.

It is found in the cytoplasm. Its subcellular location is the nucleus. It carries out the reaction L-seryl-[protein] + ATP = O-phospho-L-seryl-[protein] + ADP + H(+). The enzyme catalyses L-threonyl-[protein] + ATP = O-phospho-L-threonyl-[protein] + ADP + H(+). With respect to regulation, inhibited by the C-terminal non-catalytic region. Activated by caspase-cleavage. Full activation also requires homodimerization and autophosphorylation of Thr-180, which are inhibited by the proto-oncogene product RAF1. Activated by RASSF1 which acts by preventing its dephosphorylation. When autophosphorylated at Thr-180, recruits STRIPAK complex and promotes PP2A-mediated dephosphorylation and inactivation of STK3. Functionally, stress-activated, pro-apoptotic kinase which, following caspase-cleavage, enters the nucleus and induces chromatin condensation followed by internucleosomal DNA fragmentation. Key component of the Hippo signaling pathway which plays a pivotal role in organ size control and tumor suppression by restricting proliferation and promoting apoptosis. The core of this pathway is composed of a kinase cascade wherein STK3/MST2 and STK4/MST1, in complex with its regulatory protein SAV1, phosphorylates and activates LATS1/2 in complex with its regulatory protein MOB1, which in turn phosphorylates and inactivates YAP1 oncoprotein and WWTR1/TAZ. Phosphorylation of YAP1 by LATS2 inhibits its translocation into the nucleus to regulate cellular genes important for cell proliferation, cell death, and cell migration. STK3/MST2 and STK4/MST1 are required to repress proliferation of mature hepatocytes, to prevent activation of facultative adult liver stem cells (oval cells), and to inhibit tumor formation. Phosphorylates NKX2-1. Phosphorylates NEK2 and plays a role in centrosome disjunction by regulating the localization of NEK2 to centrosomes, and its ability to phosphorylate CROCC and CEP250. In conjunction with SAV1, activates the transcriptional activity of ESR1 through the modulation of its phosphorylation. Positively regulates RAF1 activation via suppression of the inhibitory phosphorylation of RAF1 on 'Ser-259'. Phosphorylates MOBKL1A and RASSF2. Phosphorylates MOBKL1B on 'Thr-74'. Acts cooperatively with MOBKL1B to activate STK38. The chain is Serine/threonine-protein kinase 3 (Stk3) from Mus musculus (Mouse).